A 571-amino-acid polypeptide reads, in one-letter code: UvrABC system protein C (571 aa).

Positions 15 to 93 (TSPGVYLWKD…IDRYNPEFNI (79 aa)) constitute a GIY-YIG domain. A UVR domain is found at 184 to 219 (NNYINELTNKMHQAANNMQFELALFLRDGLTYLKKL).

This sequence belongs to the UvrC family. In terms of assembly, interacts with UvrB in an incision complex.

It localises to the cytoplasm. The UvrABC repair system catalyzes the recognition and processing of DNA lesions. UvrC both incises the 5' and 3' sides of the lesion. The N-terminal half is responsible for the 3' incision and the C-terminal half is responsible for the 5' incision. The sequence is that of UvrABC system protein C from Mycoplasmopsis bovis (strain ATCC 25523 / DSM 22781 / NCTC 10131 / PG45) (Mycoplasma bovis).